Reading from the N-terminus, the 386-residue chain is MQMADLEKKLENSVLPPLLRRELSEKILKENINEEYIVDEIIQETIRAYSRTVIEPGEAVGVIAAQSIGEPGTQMTMRTFHYAGVAELNVTLGLPRMIEIVDARKEPSTPTMSIYLRGDYKYDRESAAIVSKNIESTTVESVSEDISVDLVNECITIVLDVQQLESRQLTVNNVVEAIKSKMKLKIEENENILSLKIKTPSLKALRKRLPKVREIHLKGVPNIKRVIIRKEIDEYVLYSEGSNLKEVFEIDGVDTTKTTTNNIVEIQDVLGVEAARNAIIREMDATLGNQGLTVDKRHLMMVADLMTTDGVVKPIGRHGIGGEKASVLARAAFEETVKHLYSASMRGYVDDLSGVVENIIVGKPISMGTGCINVCIKKEYEEGKEL.

Belongs to the RNA polymerase beta' chain family. Part of the RNA polymerase complex.

Its subcellular location is the cytoplasm. The enzyme catalyses RNA(n) + a ribonucleoside 5'-triphosphate = RNA(n+1) + diphosphate. Functionally, DNA-dependent RNA polymerase (RNAP) catalyzes the transcription of DNA into RNA using the four ribonucleoside triphosphates as substrates. Forms part of the jaw domain. This is DNA-directed RNA polymerase subunit Rpo1C from Methanococcus vannielii (strain ATCC 35089 / DSM 1224 / JCM 13029 / OCM 148 / SB).